Consider the following 423-residue polypeptide: Maltooligosaccharide ABC transporter solute-binding lipoprotein (423 aa).

A signal peptide spans 1–24; it reads MSSKFMKSTAVLGTVTLASLLLVA. A lipid anchor (N-palmitoyl cysteine) is attached at cysteine 25. Cysteine 25 carries S-diacylglycerol cysteine lipidation. Substrate-binding positions include tyrosine 52, aspartate 77, aspartate 83, 103 to 104, glutamate 148, aspartate 193, asparagine 196, 251 to 254, tryptophan 274, and lysine 307; these read DR and EGAG.

The protein belongs to the bacterial solute-binding protein 1 family.

It is found in the cell membrane. Part of an ABC transporter complex involved in the uptake of maltodextrins. Binds glycogen-derived linear maltooligosaccharides increasing in size from maltotriose to maltooctaose with the highest affinity for maltotriose. Has a very weak affinity for maltose. Has also a very low affinity for maltotetraitol, indicating that the binding is selective for maltooligosaccharides with an intact reducing end. In Streptococcus pneumoniae (strain ATCC BAA-255 / R6), this protein is Maltooligosaccharide ABC transporter solute-binding lipoprotein (malX).